Consider the following 433-residue polypeptide: Trigger factor (433 aa).

In terms of domain architecture, PPIase FKBP-type spans 161–246 (GKRVSIDFVG…VNKVEARELP (86 aa)).

Belongs to the FKBP-type PPIase family. Tig subfamily.

Its subcellular location is the cytoplasm. The catalysed reaction is [protein]-peptidylproline (omega=180) = [protein]-peptidylproline (omega=0). Involved in protein export. Acts as a chaperone by maintaining the newly synthesized protein in an open conformation. Functions as a peptidyl-prolyl cis-trans isomerase. This is Trigger factor from Vibrio cholerae serotype O1 (strain ATCC 39541 / Classical Ogawa 395 / O395).